A 191-amino-acid polypeptide reads, in one-letter code: uncharacterized protein (191 aa).

Residues 87–184 form the Fe2OG dioxygenase domain; it reads EFDSALIFHY…RIAITFRQMG (98 aa).

This is an uncharacterized protein from Acanthamoeba polyphaga mimivirus (APMV).